The primary structure comprises 409 residues: MARAKFERTKPHVNVGTIGHVDHGKTTLTAAITMTLAAQGKAQARKYDEIDAAPEEKARGITINTAHVEYETEKRHYAHVDCPGHADYVKNMITGAAQMDGAILVVAATDGAMPQTKEHILLARQVGVPSIVVFLNKVDMVDDEELLELVELELRELLNEYEFPGDEVPIIRGSGLKALEAMTANPKTLRGENEWVDKIYELMDAVDNYIPTPERDVDKPFLMAVEDVFSITGRGTVATGRIERGRIKLNETVELVGLRETRTTTVTGIEMFKKSLEEGIAGDNAGLLLRGLKKEDVERGMVIAKPGSITPHTKFEGEVYVLTEKEGGRKTPFFAGYRPQFYVRTTDVTGTITSFTSDDGSAAEMVMPGDRIKMTVELIQPIAIEQGMRFAIREGGRTIGAGVVSKIIE.

One can recognise a tr-type G domain in the interval 10-214 (KPHVNVGTIG…AVDNYIPTPE (205 aa)). Residues 19–26 (GHVDHGKT) are G1. 19-26 (GHVDHGKT) contacts GTP. Thr-26 lines the Mg(2+) pocket. Residues 60 to 64 (GITIN) form a G2 region. A G3 region spans residues 81 to 84 (DCPG). Residues 81–85 (DCPGH) and 136–139 (NKVD) each bind GTP. Residues 136-139 (NKVD) form a G4 region. The interval 174–176 (SGL) is G5.

This sequence belongs to the TRAFAC class translation factor GTPase superfamily. Classic translation factor GTPase family. EF-Tu/EF-1A subfamily. As to quaternary structure, monomer.

The protein resides in the cytoplasm. The enzyme catalyses GTP + H2O = GDP + phosphate + H(+). In terms of biological role, GTP hydrolase that promotes the GTP-dependent binding of aminoacyl-tRNA to the A-site of ribosomes during protein biosynthesis. This Thermosynechococcus vestitus (strain NIES-2133 / IAM M-273 / BP-1) protein is Elongation factor Tu.